The following is a 334-amino-acid chain: Anthranilate phosphoribosyltransferase (334 aa).

Residues Gly-79, 82-83, Ser-87, 89-92, 107-115, and Ser-119 contribute to the 5-phospho-alpha-D-ribose 1-diphosphate site; these read GD, NIST, and KHGNRSISS. An anthranilate-binding site is contributed by Gly-79. Ser-91 contributes to the Mg(2+) binding site. Asn-110 is a binding site for anthranilate. An anthranilate-binding site is contributed by Arg-165. Mg(2+)-binding residues include Asp-224 and Glu-225.

This sequence belongs to the anthranilate phosphoribosyltransferase family. As to quaternary structure, homodimer. Mg(2+) is required as a cofactor.

The enzyme catalyses N-(5-phospho-beta-D-ribosyl)anthranilate + diphosphate = 5-phospho-alpha-D-ribose 1-diphosphate + anthranilate. Its pathway is amino-acid biosynthesis; L-tryptophan biosynthesis; L-tryptophan from chorismate: step 2/5. Functionally, catalyzes the transfer of the phosphoribosyl group of 5-phosphorylribose-1-pyrophosphate (PRPP) to anthranilate to yield N-(5'-phosphoribosyl)-anthranilate (PRA). The sequence is that of Anthranilate phosphoribosyltransferase from Streptococcus sanguinis (strain SK36).